The sequence spans 283 residues: Tumor necrosis factor receptor superfamily member 14 (283 aa).

A signal peptide spans 1–38; it reads MEPPGDWGPPPWRSTPKTDVLRLVLYLTFLGAPCYAPA. Residues 39-202 lie on the Extracellular side of the membrane; that stretch reads LPSCKEDEYP…GAGTSSSHWV (164 aa). Intrachain disulfides connect cysteine 42–cysteine 53, cysteine 54–cysteine 67, cysteine 57–cysteine 75, cysteine 78–cysteine 93, cysteine 96–cysteine 111, cysteine 99–cysteine 119, cysteine 121–cysteine 138, and cysteine 127–cysteine 135. TNFR-Cys repeat units lie at residues 42–75, 78–119, and 121–162; these read CKEDEYPVGSECCPKCSPGYRVKEACGELTGTVC, CPPG…NAVC, and CSPG…DTLC. Residue asparagine 110 is glycosylated (N-linked (GlcNAc...) asparagine). N-linked (GlcNAc...) asparagine glycosylation is present at asparagine 173. The chain crosses the membrane as a helical span at residues 203–223; sequence WWFLSGSLVIVIVCSTVGLII. At 224–283 the chain is on the cytoplasmic side; the sequence is CVKRRKPRGDVVKVIVSVQRKRQEAEGEATVIEALQAPPDVTTVAVEETIPSFTGRSPNH. Serine 240 carries the post-translational modification Phosphoserine.

Belongs to the tumor necrosis factor receptor superfamily. As to quaternary structure, interacts with TRAF2, TRAF3 and TRAF5. Interacts (via CRD1/TNFR-Cys 1) with CD160; this interaction is direct. Interacts with LTA and TNFSF14. Interacts (via CRD1/TNFR-Cys 1) in cis and trans with BTLA; the cis interactions inhibits the trans interactions. In terms of assembly, (Microbial infection) Interacts with herpes simplex virus 1/HHV-1 envelope glycoprotein D. (Microbial infection) Interacts with herpes simplex virus 2/HHV-2 envelope glycoprotein D. Post-translationally, N-glycosylated. Widely expressed, with the highest expression in lung, spleen and thymus. Expressed in a subpopulation of B cells and monocytes. Expressed in naive T cells.

The protein resides in the cell membrane. Its function is as follows. Receptor for four distinct ligands: The TNF superfamily members TNFSF14/LIGHT and homotrimeric LTA/lymphotoxin-alpha and the immunoglobulin superfamily members BTLA and CD160, altogether defining a complex stimulatory and inhibitory signaling network. Signals via the TRAF2-TRAF3 E3 ligase pathway to promote immune cell survival and differentiation. Participates in bidirectional cell-cell contact signaling between antigen presenting cells and lymphocytes. In response to ligation of TNFSF14/LIGHT, delivers costimulatory signals to T cells, promoting cell proliferation and effector functions. Interacts with CD160 on NK cells, enhancing IFNG production and anti-tumor immune response. In the context of bacterial infection, acts as a signaling receptor on epithelial cells for CD160 from intraepithelial lymphocytes, triggering the production of antimicrobial proteins and pro-inflammatory cytokines. Upon binding to CD160 on activated CD4+ T cells, down-regulates CD28 costimulatory signaling, restricting memory and alloantigen-specific immune response. May interact in cis (on the same cell) or in trans (on other cells) with BTLA. In cis interactions, appears to play an immune regulatory role inhibiting in trans interactions in naive T cells to maintain a resting state. In trans interactions, can predominate during adaptive immune response to provide survival signals to effector T cells. (Microbial infection) Acts as a receptor for Herpes simplex virus 1/HHV-1. In terms of biological role, (Microbial infection) Acts as a receptor for Herpes simplex virus 2/HHV-2. In Homo sapiens (Human), this protein is Tumor necrosis factor receptor superfamily member 14.